The sequence spans 252 residues: LexA repressor (252 aa).

The interval M1–R46 is disordered. Positions I67 to K87 form a DNA-binding region, H-T-H motif. Residues S176 and K213 each act as for autocatalytic cleavage activity in the active site.

The protein belongs to the peptidase S24 family. In terms of assembly, homodimer.

It carries out the reaction Hydrolysis of Ala-|-Gly bond in repressor LexA.. In terms of biological role, represses a number of genes involved in the response to DNA damage (SOS response), including recA and lexA. In the presence of single-stranded DNA, RecA interacts with LexA causing an autocatalytic cleavage which disrupts the DNA-binding part of LexA, leading to derepression of the SOS regulon and eventually DNA repair. This chain is LexA repressor, found in Thermobifida fusca (strain YX).